We begin with the raw amino-acid sequence, 316 residues long: Olfactory receptor 10H4 (316 aa).

Residues 1–26 lie on the Extracellular side of the membrane; sequence MPSQNYSIISEFNLFGFSAFPQHLLP. N5 carries N-linked (GlcNAc...) asparagine glycosylation. A helical transmembrane segment spans residues 27-47; it reads ILFLLYLLMFLFTLLGNLLIM. Over 48–55 the chain is Cytoplasmic; it reads ATIWIEHR. Residues 56–76 form a helical membrane-spanning segment; that stretch reads LHTPMYLFLCTLSVSEILFTV. At 77–100 the chain is on the extracellular side; sequence AITPRMLADLLSTHHSITFVACAN. Cysteines 98 and 190 form a disulfide. A helical membrane pass occupies residues 101–121; sequence QMFFSFMFGFTHSFLLLVMGY. Over 122–140 the chain is Cytoplasmic; the sequence is DRYVAICHPLRYNVLMSPR. The chain crosses the membrane as a helical span at residues 141–161; that stretch reads DCAHLVACTWAGGSVMGMMVT. The Extracellular segment spans residues 162 to 198; sequence TIVFHLTFCGSNVIHHFFCHVLSLLKLACENKTSSVI. Residues 199–219 form a helical membrane-spanning segment; sequence MGVMLVCVTALIGCLFLIILS. The Cytoplasmic portion of the chain corresponds to 220-239; sequence YVFIVAAILRIPSAEGRHKT. A helical transmembrane segment spans residues 240-260; it reads FSTCVSHLTVVVTHYSFASFI. Over 261–273 the chain is Extracellular; sequence YLKPKGLHSMYSD. Residues 274 to 294 traverse the membrane as a helical segment; the sequence is ALMATTYTVFTPFLSPIIFSL. At 295–316 the chain is on the cytoplasmic side; it reads RNKELKNAINKNFYRKFCPPSS.

This sequence belongs to the G-protein coupled receptor 1 family.

It is found in the cell membrane. Its function is as follows. Odorant receptor. The polypeptide is Olfactory receptor 10H4 (OR10H4) (Homo sapiens (Human)).